A 457-amino-acid polypeptide reads, in one-letter code: Peptidyl-prolyl cis-trans isomerase FKBP5 (457 aa).

Met1 is modified (N-acetylmethionine). Basic and acidic residues predominate over residues 1–11; it reads MTTDEGAKSSR. Positions 1 to 28 are disordered; sequence MTTDEGAKSSRENPAATVAEQGEDVTSK. The residue at position 28 (Lys28) is an N6-acetyllysine. PPIase FKBP-type domains lie at 50–138 and 165–251; these read GDKV…LNFK and GARV…KSFE. TPR repeat units follow at residues 268–301, 317–350, and 351–384; these read AAIV…LEME, LAAF…DSAN, and EKGL…NPQN. The segment at 424-457 is disordered; that stretch reads EANKAVSKKTSEGVTNEKLTVSHAVEEEKPEGHV. A Phosphoserine modification is found at Ser445. Basic and acidic residues predominate over residues 447 to 457; the sequence is AVEEEKPEGHV.

Part of a heteromultimeric cytoplasmic complex with HSP90AA1, HSPA1A/HSPA1B and steroid receptors. Upon ligand binding dissociates from the complex and FKBP4 takes its place. Interacts with functionally mature heterooligomeric progesterone receptor complexes along with HSP90 and TEBP. Interacts with NR3C1. Interacts with Akt/AKT1 and PHLPP1; enhancing dephosphorylation and subsequent activation of Akt/AKT1. Interacts with IFI44L; this interaction modulates the kinase activity of IKBKB and IKBKE. Interacts with IKBKB and IKBKE. Post-translationally, acetylation impairs ability to promote interaction between Akt/AKT1 and PHLPP1. Deacetylation by SIRT7 promotes interaction between Akt/AKT1 and PHLPP1, leading to suppress Akt/AKT1 activation. In terms of processing, ubiquitinated, leading to degradation in a proteasome-dependent manner. Deubiquitinated by USP49, leading to stabilization.

The protein resides in the cytoplasm. Its subcellular location is the nucleus. It carries out the reaction [protein]-peptidylproline (omega=180) = [protein]-peptidylproline (omega=0). Inhibited by both FK506 and rapamycin. Its function is as follows. Immunophilin protein with PPIase and co-chaperone activities. Component of unligated steroid receptors heterocomplexes through interaction with heat-shock protein 90 (HSP90). Plays a role in the intracellular trafficking of heterooligomeric forms of steroid hormone receptors maintaining the complex into the cytoplasm when unliganded. Acts as a regulator of Akt/AKT1 activity by promoting the interaction between Akt/AKT1 and PHLPP1, thereby enhancing dephosphorylation and subsequent activation of Akt/AKT1. Interacts with IKBKE and IKBKB which facilitates IKK complex assembly leading to increased IKBKE and IKBKB kinase activity, NF-kappaB activation, and IFN production. This is Peptidyl-prolyl cis-trans isomerase FKBP5 (FKBP5) from Saguinus oedipus (Cotton-top tamarin).